The chain runs to 492 residues: Vacuolar fusion protein CCZ1 homolog (492 aa).

The tract at residues 255–275 (SVHAGPTSSSSNGTASVERPL) is disordered. The span at 260-269 (PTSSSSNGTA) shows a compositional bias: polar residues.

Belongs to the CCZ1 family. In terms of assembly, interacts with MON1.

The protein localises to the endosome. Its subcellular location is the prevacuolar compartment. Plays an important role in membrane trafficking through the secretory apparatus. In complex with MON1, acts as a guanine exchange factor (GEF) for Rab7 protein family. Promotes the exchange of GDP to GTP, converting it from an inactive GDP-bound form into an active GTP-bound form. The active form is involved in protein trafficking from prevacuolar compartments (PVCs) to vacuoles. May serve as a linker between Rab5 and Rab7 protein families in PVCs and mediate PVC maturation. The protein is Vacuolar fusion protein CCZ1 homolog of Oryza sativa subsp. japonica (Rice).